Consider the following 157-residue polypeptide: Protein Smg homolog (157 aa).

The protein belongs to the Smg family.

This Shewanella putrefaciens (strain CN-32 / ATCC BAA-453) protein is Protein Smg homolog.